The sequence spans 191 residues: GTP cyclohydrolase 1 (191 aa).

Residues Cys-80, His-83, and Cys-151 each coordinate Zn(2+).

Belongs to the GTP cyclohydrolase I family. As to quaternary structure, toroid-shaped homodecamer, composed of two pentamers of five dimers.

It carries out the reaction GTP + H2O = 7,8-dihydroneopterin 3'-triphosphate + formate + H(+). Its pathway is cofactor biosynthesis; 7,8-dihydroneopterin triphosphate biosynthesis; 7,8-dihydroneopterin triphosphate from GTP: step 1/1. The chain is GTP cyclohydrolase 1 from Nitrosospira multiformis (strain ATCC 25196 / NCIMB 11849 / C 71).